Consider the following 146-residue polypeptide: Large ribosomal subunit protein uL13 (146 aa).

Residues 125–146 form a disordered region; sequence YAGPKHPHAAQQPKVYEPRPRG.

The protein belongs to the universal ribosomal protein uL13 family. Part of the 50S ribosomal subunit.

Functionally, this protein is one of the early assembly proteins of the 50S ribosomal subunit, although it is not seen to bind rRNA by itself. It is important during the early stages of 50S assembly. This Roseiflexus sp. (strain RS-1) protein is Large ribosomal subunit protein uL13.